The chain runs to 370 residues: 3-isopropylmalate dehydrogenase (370 aa).

77-90 (GPKWDGVPYEHRPE) contributes to the NAD(+) binding site. R97, R107, R135, and D226 together coordinate substrate. Mg(2+)-binding residues include D226, D250, and D254. Residue 290 to 302 (GSAPDIAGKSIAN) coordinates NAD(+).

Belongs to the isocitrate and isopropylmalate dehydrogenases family. LeuB type 1 subfamily. In terms of assembly, homodimer. Requires Mg(2+) as cofactor. The cofactor is Mn(2+).

It is found in the cytoplasm. It carries out the reaction (2R,3S)-3-isopropylmalate + NAD(+) = 4-methyl-2-oxopentanoate + CO2 + NADH. It participates in amino-acid biosynthesis; L-leucine biosynthesis; L-leucine from 3-methyl-2-oxobutanoate: step 3/4. Catalyzes the oxidation of 3-carboxy-2-hydroxy-4-methylpentanoate (3-isopropylmalate) to 3-carboxy-4-methyl-2-oxopentanoate. The product decarboxylates to 4-methyl-2 oxopentanoate. The polypeptide is 3-isopropylmalate dehydrogenase (leuB) (Agrobacterium fabrum (strain C58 / ATCC 33970) (Agrobacterium tumefaciens (strain C58))).